A 485-amino-acid polypeptide reads, in one-letter code: N-succinylglutamate 5-semialdehyde dehydrogenase (485 aa).

An NAD(+)-binding site is contributed by 220–225; that stretch reads GSANTG. Residues glutamate 243 and cysteine 278 contribute to the active site.

This sequence belongs to the aldehyde dehydrogenase family. AstD subfamily.

The enzyme catalyses N-succinyl-L-glutamate 5-semialdehyde + NAD(+) + H2O = N-succinyl-L-glutamate + NADH + 2 H(+). It participates in amino-acid degradation; L-arginine degradation via AST pathway; L-glutamate and succinate from L-arginine: step 4/5. Functionally, catalyzes the NAD-dependent reduction of succinylglutamate semialdehyde into succinylglutamate. The polypeptide is N-succinylglutamate 5-semialdehyde dehydrogenase (Vibrio parahaemolyticus serotype O3:K6 (strain RIMD 2210633)).